A 295-amino-acid polypeptide reads, in one-letter code: Alpha-soluble NSF attachment protein (295 aa).

M1 carries the N-acetylmethionine modification. Phosphoserine occurs at positions 26, 29, and 195.

Belongs to the SNAP family. Interacts with PRKCABP, and disrupts the interaction between GRIA2 and PRKCABP, leading to the internalization of GRIA2. Found in a complex with VAMP8. Component of a SNARE-like complex that contains at least ZW10, USE1L, RINT1, STX18 and NAPA/SNAP-alpha. Interacts with VTI1A. Interacts with STX12. Interacts with GNA12 (via N-terminus); the interaction promotes CDH5 localization to plasma membrane.

It is found in the cell membrane. Its function is as follows. Required for vesicular transport between the endoplasmic reticulum and the Golgi apparatus. Together with GNA12 promotes CDH5 localization to plasma membrane. This chain is Alpha-soluble NSF attachment protein (NAPA), found in Homo sapiens (Human).